The following is a 421-amino-acid chain: uncharacterized protein (421 aa).

Coiled-coil stretches lie at residues 126–182 and 328–397; these read YART…IQKI and YQVE…RLTL.

This is an uncharacterized protein from Treponema pallidum (strain Nichols).